Consider the following 179-residue polypeptide: Apoptosis regulator DPV022 (179 aa).

The helical transmembrane segment at Val-148–Ile-170 threads the bilayer.

As to quaternary structure, interacts with host BAX and BAK1.

It is found in the host mitochondrion. It localises to the host membrane. In terms of biological role, plays a role in the inhibition of host apoptosis by sequestering and inactivating several proapoptotic BCL-2 proteins, including BAK1 and BAX. Prevents the conformational activation of both of them. The protein is Apoptosis regulator DPV022 (DPV022) of Deerpox virus (strain Mule deer/United States/W-848-83/1983) (DPV).